The sequence spans 511 residues: ADP,ATP carrier protein 4 (511 aa).

12 consecutive transmembrane segments (helical) span residues Val-34 to Ile-54, Ile-70 to Tyr-90, Ile-102 to Phe-122, Phe-157 to Trp-177, Phe-192 to Glu-212, Phe-231 to Ile-251, Leu-296 to Lys-316, Ala-330 to Leu-350, Phe-361 to Val-381, Leu-390 to Ile-410, Leu-453 to Ser-473, and Ser-476 to Thr-496.

Belongs to the ADP/ATP translocase tlc family.

It localises to the cell membrane. Its function is as follows. Provides the rickettsial cell with host ATP in exchange for rickettsial ADP. This is an obligate exchange system. This energy acquiring activity is an important component of rickettsial parasitism. The polypeptide is ADP,ATP carrier protein 4 (tlcD) (Rickettsia conorii (strain ATCC VR-613 / Malish 7)).